The chain runs to 106 residues: Toxin-like structure LSTX-D6 (106 aa).

Residues 1–20 (MMKVLVVAALLVTLISYSSS) form the signal peptide. A propeptide spanning residues 21-41 (EGIDDLEADELLSLMANEQTR) is cleaved from the precursor. Disulfide bonds link C45/C60, C52/C69, C59/C85, and C71/C83.

The protein belongs to the neurotoxin 19 (CSTX) family. 02 (D7) subfamily. In terms of tissue distribution, expressed by the venom gland.

Its subcellular location is the secreted. This is Toxin-like structure LSTX-D6 from Lycosa singoriensis (Wolf spider).